Consider the following 307-residue polypeptide: Capsid assembly scaffolding protein (307 aa).

Composition is skewed to acidic residues over residues 45 to 54 and 83 to 101; these read IELASDEVET and EPTD…EGSE. The interval 45 to 105 is disordered; the sequence is IELASDEVET…GTEGSEEFTP (61 aa).

The protein belongs to the T7likevirus capsid assembly scaffolding protein family.

Functionally, scaffolding protein involved in the icosahedric procapsid assembly. Coassembles with the capsid proteins to form the procapsid, in which the scaffolding protein is found within the external shell of icosahedrally arranged capsid protein subunits. In a subsequent step the scaffolding protein molecules are released from the procapsid. Facilitates assembly by binding to gp10 hexamers but not the pentamers and locking them into a morphogenically correct conformation. The polypeptide is Capsid assembly scaffolding protein (Escherichia coli (Bacteriophage T7)).